The sequence spans 391 residues: Alanine racemase (391 aa).

The active-site Proton acceptor; specific for D-alanine is Lys38. Lys38 carries the N6-(pyridoxal phosphate)lysine modification. Arg136 lines the substrate pocket. The active-site Proton acceptor; specific for L-alanine is the Tyr267. Substrate is bound at residue Met315.

The protein belongs to the alanine racemase family. Pyridoxal 5'-phosphate serves as cofactor.

The enzyme catalyses L-alanine = D-alanine. It functions in the pathway amino-acid biosynthesis; D-alanine biosynthesis; D-alanine from L-alanine: step 1/1. Catalyzes the interconversion of L-alanine and D-alanine. May also act on other amino acids. This Clostridium kluyveri (strain ATCC 8527 / DSM 555 / NBRC 12016 / NCIMB 10680 / K1) protein is Alanine racemase (alr).